The following is a 172-amino-acid chain: Signal peptidase complex catalytic subunit SEC11 (172 aa).

The Cytoplasmic portion of the chain corresponds to 1–14; it reads MLSSLGNPRQAATQ. Residues 15–35 traverse the membrane as a helical; Signal-anchor for type II membrane protein segment; that stretch reads LLNFALILSTAFMMWKGLSVA. The Lumenal segment spans residues 36-172; the sequence is TDSPSPIVVV…MGLMVVLQRE (137 aa). Active-site charge relay system residues include Ser-49, His-90, and Asp-115. Residues 158–169 are C-terminal short (CTS) helix; the sequence is AMLGIMGLMVVL.

The protein belongs to the peptidase S26B family. As to quaternary structure, component of the signal peptidase complex (SPC) composed of a catalytic subunit SEC11 and three accessory subunits SPC1, SPC2 and SPC3. The complex induces a local thinning of the ER membrane which is used to measure the length of the signal peptide (SP) h-region of protein substrates. This ensures the selectivity of the complex towards h-regions shorter than 18-20 amino acids. SPC associates with the translocon complex.

The protein localises to the endoplasmic reticulum membrane. It carries out the reaction Cleavage of hydrophobic, N-terminal signal or leader sequences from secreted and periplasmic proteins.. Functionally, catalytic component of the signal peptidase complex (SPC) which catalyzes the cleavage of N-terminal signal sequences from nascent proteins as they are translocated into the lumen of the endoplasmic reticulum. Specifically cleaves N-terminal signal peptides that contain a hydrophobic alpha-helix (h-region) shorter than 18-20 amino acids. The sequence is that of Signal peptidase complex catalytic subunit SEC11 (SEC11) from Pyricularia oryzae (strain 70-15 / ATCC MYA-4617 / FGSC 8958) (Rice blast fungus).